The primary structure comprises 199 residues: IMP cyclohydrolase (199 aa).

The protein belongs to the archaeal IMP cyclohydrolase family.

It catalyses the reaction IMP + H2O = 5-formamido-1-(5-phospho-D-ribosyl)imidazole-4-carboxamide. It functions in the pathway purine metabolism; IMP biosynthesis via de novo pathway; IMP from 5-formamido-1-(5-phospho-D-ribosyl)imidazole-4-carboxamide: step 1/1. In terms of biological role, catalyzes the cyclization of 5-formylamidoimidazole-4-carboxamide ribonucleotide to IMP. The sequence is that of IMP cyclohydrolase from Methanothrix thermoacetophila (strain DSM 6194 / JCM 14653 / NBRC 101360 / PT) (Methanosaeta thermophila).